We begin with the raw amino-acid sequence, 28 residues long: Trypsin inhibitor A (28 aa).

3 disulfides stabilise this stretch: cysteine 3–cysteine 20, cysteine 10–cysteine 22, and cysteine 16–cysteine 27.

The protein belongs to the protease inhibitor I7 (squash-type serine protease inhibitor) family.

It localises to the secreted. In terms of biological role, inhibits trypsin. The polypeptide is Trypsin inhibitor A (Momordica charantia (Bitter gourd)).